A 568-amino-acid polypeptide reads, in one-letter code: MATNLTLETDKEIKNMNQLSMIDTTITRPLANYHSSVWKNYFLSYTPQLTEISSQEKLELEELKEKVRQMLVETSDKSTQKLVLIDTIQRLGVAYHFDNEIKISIQNIFDEFEQNKNEDDNDLYIVALRFRLVRGQRHYMSSDVFKKFTNDDGKFKETLTKDVQGLLNLYEATHLRVHGEQILEEALSFTVTHLKSMSPKLDSSLKAQVSEALIQPIYTNVPRVVAPKYIRIYENIESHDDLLLKFVKLDFHILQKMHQRELSELTRWWKDLDHSNKYPYARDKLVECYFWATGVYFGPQYKRARRMITKLIVIITITDDLYDAYATYDELVPYTNAVERCEISAMDSISPYMRPLYQVFLDYFDEMEEELTKDGKAHYVYYAKVEMNKLIKSYLKEAEWLKNDIIPKCEEYKRNATITVANQMILITCLIVAGEFISKETFEWMINESLIAPASSLINRLKDDIIGHEHEQQREHGASFVECYVKEYRASKQEAYVEARRQIANAWKDINTDYLHATQVPTFVLQPALNLSRLVDILQEDDFTDSQNFLKDTIKLLFVDSVNSTSCG.

Mg(2+) is bound by residues aspartate 319, aspartate 323, aspartate 463, and glutamate 471. Positions 319-323 (DDLYD) match the DDXXD motif motif.

The protein belongs to the terpene synthase family. Tpsa subfamily. Mg(2+) is required as a cofactor. Requires Mn(2+) as cofactor. Mostly expressed in roots, to a lower extent in flowers and, at low levels, in fruits.

The catalysed reaction is (2Z,6Z)-farnesyl diphosphate = (E)-alpha-bisabolene + diphosphate. The enzyme catalyses (2Z,6Z)-farnesyl diphosphate = beta-bisabolene + diphosphate. It catalyses the reaction (2E,6E)-farnesyl diphosphate = beta-bisabolene + diphosphate. It carries out the reaction (2E,6E)-farnesyl diphosphate = (Z)-gamma-bisabolene + diphosphate. The catalysed reaction is (2E,6E)-farnesyl diphosphate = (E)-gamma-bisabolene + diphosphate. The enzyme catalyses (2Z,6Z)-farnesyl diphosphate = (E)-gamma-bisabolene + diphosphate. It participates in secondary metabolite biosynthesis; terpenoid biosynthesis. In terms of biological role, sesquiterpene synthase involved in the biosynthesis of volatile compounds. Mediates the conversion of (2E,6E)-farnesyl diphosphate ((EE)-FPP) into beta-bisabolene, and of (2Z,6Z)-farnesyl diphosphate ((ZZ)-FPP) into alpha-bisabolene, but also smaller amounts of (Z)-gamma-bisabolene, (E)-gamma-bisabolene and nerolidol. The chain is Sesquiterpene synthase 14 from Solanum lycopersicum (Tomato).